The following is a 282-amino-acid chain: MQEIFLCSISNVRSGDCKEDCAYCTQSSHHQGAIKRYKFKDEKVVLQEARALRELGALGFCLVTSGRELDDEKCEYIAKLAKAINKEELGLHLIACCGRADLEQLEFLRDAGIHSYNHNLETSQNFFPKICSTHTWEERFITCENALRAGLGLCSGGIFGLNESWEDRIEMLRALASLSPHTTPINFFIKNPVLPIDAETLSADEALECVLLAKEFLPNARLMVAGGREVVFKDNDKKEAKLFEYGINAVVLGDYLTTKGKAPKKDIEKLLSYGLTMATSCH.

The region spanning 1 to 228 is the Radical SAM core domain; the sequence is MQEIFLCSIS…NARLMVAGGR (228 aa). Residues Cys-17, Cys-21, and Cys-24 each contribute to the [4Fe-4S] cluster site. Residues Cys-61, Cys-96, Cys-154, and Arg-221 each coordinate [2Fe-2S] cluster.

The protein belongs to the radical SAM superfamily. Biotin synthase family. In terms of assembly, homodimer. [4Fe-4S] cluster serves as cofactor. [2Fe-2S] cluster is required as a cofactor.

The catalysed reaction is (4R,5S)-dethiobiotin + (sulfur carrier)-SH + 2 reduced [2Fe-2S]-[ferredoxin] + 2 S-adenosyl-L-methionine = (sulfur carrier)-H + biotin + 2 5'-deoxyadenosine + 2 L-methionine + 2 oxidized [2Fe-2S]-[ferredoxin]. It functions in the pathway cofactor biosynthesis; biotin biosynthesis; biotin from 7,8-diaminononanoate: step 2/2. Functionally, catalyzes the conversion of dethiobiotin (DTB) to biotin by the insertion of a sulfur atom into dethiobiotin via a radical-based mechanism. The protein is Biotin synthase of Helicobacter pylori (strain G27).